The following is a 92-amino-acid chain: Acylphosphatase (92 aa).

Residues 6–92 enclose the Acylphosphatase-like domain; sequence RMYVIVYGIV…TGEFASFDTY (87 aa). Catalysis depends on residues Arg-21 and Asn-39.

This sequence belongs to the acylphosphatase family.

It carries out the reaction an acyl phosphate + H2O = a carboxylate + phosphate + H(+). This Sulfolobus acidocaldarius (strain ATCC 33909 / DSM 639 / JCM 8929 / NBRC 15157 / NCIMB 11770) protein is Acylphosphatase (acyP).